The primary structure comprises 355 residues: Uroporphyrinogen decarboxylase (355 aa).

Substrate is bound by residues 27-31, aspartate 77, tyrosine 154, threonine 209, and histidine 328; that span reads RQAGR.

It belongs to the uroporphyrinogen decarboxylase family. As to quaternary structure, homodimer.

Its subcellular location is the cytoplasm. It carries out the reaction uroporphyrinogen III + 4 H(+) = coproporphyrinogen III + 4 CO2. It participates in porphyrin-containing compound metabolism; protoporphyrin-IX biosynthesis; coproporphyrinogen-III from 5-aminolevulinate: step 4/4. Catalyzes the decarboxylation of four acetate groups of uroporphyrinogen-III to yield coproporphyrinogen-III. This Vibrio campbellii (strain ATCC BAA-1116) protein is Uroporphyrinogen decarboxylase.